We begin with the raw amino-acid sequence, 431 residues long: Glutamate-1-semialdehyde 2,1-aminomutase (431 aa).

Lysine 269 carries the N6-(pyridoxal phosphate)lysine modification.

The protein belongs to the class-III pyridoxal-phosphate-dependent aminotransferase family. HemL subfamily. Homodimer. Pyridoxal 5'-phosphate serves as cofactor.

It localises to the cytoplasm. It carries out the reaction (S)-4-amino-5-oxopentanoate = 5-aminolevulinate. It functions in the pathway porphyrin-containing compound metabolism; protoporphyrin-IX biosynthesis; 5-aminolevulinate from L-glutamyl-tRNA(Glu): step 2/2. In Francisella tularensis subsp. tularensis (strain SCHU S4 / Schu 4), this protein is Glutamate-1-semialdehyde 2,1-aminomutase.